The chain runs to 89 residues: Defensin-like protein 78 (89 aa).

Residues 1–30 (MANNMVASPYKNTFMMIALVLILLISGSEA) form the signal peptide. Cystine bridges form between C40–C75, C44–C67, C52–C73, and C56–C74.

It belongs to the DEFL family.

The protein localises to the secreted. The polypeptide is Defensin-like protein 78 (Arabidopsis thaliana (Mouse-ear cress)).